The sequence spans 286 residues: Diaminopimelate epimerase (286 aa).

Residues Asn22, Gln56, and Asn76 each coordinate substrate. Cys85 acts as the Proton donor in catalysis. Residues 86 to 87, Asn169, Asn202, and 220 to 221 each bind substrate; these read GN and ER. The active-site Proton acceptor is the Cys229. 230-231 is a binding site for substrate; that stretch reads GS.

This sequence belongs to the diaminopimelate epimerase family. As to quaternary structure, homodimer.

It is found in the cytoplasm. The enzyme catalyses (2S,6S)-2,6-diaminopimelate = meso-2,6-diaminopimelate. The protein operates within amino-acid biosynthesis; L-lysine biosynthesis via DAP pathway; DL-2,6-diaminopimelate from LL-2,6-diaminopimelate: step 1/1. Its function is as follows. Catalyzes the stereoinversion of LL-2,6-diaminopimelate (L,L-DAP) to meso-diaminopimelate (meso-DAP), a precursor of L-lysine and an essential component of the bacterial peptidoglycan. The sequence is that of Diaminopimelate epimerase from Buchnera aphidicola subsp. Baizongia pistaciae (strain Bp).